Here is an 862-residue protein sequence, read N- to C-terminus: MTSIDSSELEKHTPMMRQYLTMKAAHPEMLLFYRMGDFYELFYEDAKLASELLGISLTARGKSGGDPIPMAGLPYHAVEGYLAKLVQIGQSVAICEQVGDPATSKGPVERKVVRIVTPGTLTDEALLQEHQDNLLAAIYQGKVGFGYATLDISSGRFVIAELDTQEALEAELQRTRPVELLYSEDFSNLSLINHLKGIRRRPEWEFDFDTSVNLLLQQFGTKDLHGFGISDARLSLQAAGCLMQYVKDTQKTALPHINAIVRFNQADSIILDAATRRNLELTQNLSGGREHTLAWVLDNTATPMGSRMLQRWLHQPLRDNNIIASRHNAVAELIEANLFDELHQQLKSLGDIERIMARLALRSARPRDFARLRQALSLLPELQHTLGQCKTPLLTKLAQLIGEFPAEHELLENAIVDSPPMLIRDGGVIRSGYHSELDEWRALSEGASDYLTELEAREKQATGISTLKVGYNRVHGYYIEVSRLQADKVPLSYQRRQTLKGTERYITPELKVYEEKVLSSQGKALALEKQLWDQLFDLILPKLNELRDFANAAAELDVICCFAERAESLHYTQPQMVSKTGIQINAGRHPVVERVSSTAFIANPVNLDAKRHMLIVTGPNMGGKSTYMRQVALISLMAHIGCFVPADSAVIGPIDRIFTRIGASDDLASGRSTFMVEMTETANILHNATSQSLVLMDEIGRGTSTYDGLSLAWSAAEYLALQIKAMTLFATHYFELTQLPDLIPGANNVHLDAIEHDDTIAFMHAVQEGAASKSYGLQVAALAGVPSHVIQAAKHKLHQLESRDNQASPAVASAPQQQSLSLSPAPMMGEKALNKLTTINPDELSPKQALDLLYELKKLAKS.

Position 618–625 (618–625 (GPNMGGKS)) interacts with ATP. The disordered stretch occupies residues 799–824 (QLESRDNQASPAVASAPQQQSLSLSP). The segment covering 806–824 (QASPAVASAPQQQSLSLSP) has biased composition (low complexity).

It belongs to the DNA mismatch repair MutS family.

In terms of biological role, this protein is involved in the repair of mismatches in DNA. It is possible that it carries out the mismatch recognition step. This protein has a weak ATPase activity. The polypeptide is DNA mismatch repair protein MutS (Shewanella denitrificans (strain OS217 / ATCC BAA-1090 / DSM 15013)).